Reading from the N-terminus, the 502-residue chain is Probable cytosol aminopeptidase (502 aa).

Mn(2+)-binding residues include Lys-275 and Asp-280. The active site involves Lys-287. Mn(2+) is bound by residues Asp-298, Asp-357, and Glu-359. Arg-361 is a catalytic residue.

The protein belongs to the peptidase M17 family. It depends on Mn(2+) as a cofactor.

It localises to the cytoplasm. It catalyses the reaction Release of an N-terminal amino acid, Xaa-|-Yaa-, in which Xaa is preferably Leu, but may be other amino acids including Pro although not Arg or Lys, and Yaa may be Pro. Amino acid amides and methyl esters are also readily hydrolyzed, but rates on arylamides are exceedingly low.. The catalysed reaction is Release of an N-terminal amino acid, preferentially leucine, but not glutamic or aspartic acids.. Functionally, presumably involved in the processing and regular turnover of intracellular proteins. Catalyzes the removal of unsubstituted N-terminal amino acids from various peptides. This is Probable cytosol aminopeptidase from Ralstonia pickettii (strain 12J).